The following is a 449-amino-acid chain: Tol-Pal system protein TolB (449 aa).

Residues 1 to 36 (MDCPNMPLHINRRQMLLSAATAAGALALGPARDAFG) form the signal peptide.

It belongs to the TolB family. As to quaternary structure, the Tol-Pal system is composed of five core proteins: the inner membrane proteins TolA, TolQ and TolR, the periplasmic protein TolB and the outer membrane protein Pal. They form a network linking the inner and outer membranes and the peptidoglycan layer.

It localises to the periplasm. In terms of biological role, part of the Tol-Pal system, which plays a role in outer membrane invagination during cell division and is important for maintaining outer membrane integrity. This chain is Tol-Pal system protein TolB, found in Rhodopseudomonas palustris (strain HaA2).